A 280-amino-acid chain; its full sequence is Probable N-acetyltransferase 14 (280 aa).

Helical transmembrane passes span 37–57 and 60–80; these read LILH…LSSI and CVLH…VIYL. The interval 111 to 152 is disordered; the sequence is PDLPNPHLGRAKLTTNQEKTRRRKKAKEKEKMNESEQVDEDE. Residues 116–273 form the N-acetyltransferase domain; the sequence is PHLGRAKLTT…EKGWLGYPLT (158 aa).

The protein belongs to the camello family.

The protein resides in the membrane. Functionally, probable acetyltransferase. The sequence is that of Probable N-acetyltransferase 14 (nat14) from Danio rerio (Zebrafish).